Reading from the N-terminus, the 1400-residue chain is DNA-directed RNA polymerase subunit beta' (1400 aa).

C71, C73, C86, and C89 together coordinate Zn(2+). The Mg(2+) site is built by D462, D464, and D466. Zn(2+)-binding residues include C820, C893, C900, and C903.

The protein belongs to the RNA polymerase beta' chain family. The RNAP catalytic core consists of 2 alpha, 1 beta, 1 beta' and 1 omega subunit. When a sigma factor is associated with the core the holoenzyme is formed, which can initiate transcription. The cofactor is Mg(2+). Requires Zn(2+) as cofactor.

The catalysed reaction is RNA(n) + a ribonucleoside 5'-triphosphate = RNA(n+1) + diphosphate. Its function is as follows. DNA-dependent RNA polymerase catalyzes the transcription of DNA into RNA using the four ribonucleoside triphosphates as substrates. The polypeptide is DNA-directed RNA polymerase subunit beta' (Methylobacterium nodulans (strain LMG 21967 / CNCM I-2342 / ORS 2060)).